Reading from the N-terminus, the 148-residue chain is Pseudoazurin (148 aa).

The signal sequence occupies residues 1–25 (MMIFRALIAAATLAIAIATTLPAAA). The region spanning 30–118 (VKMLNSGPGG…MGMVALVVVG (89 aa)) is the Plastocyanin-like domain. Residues H65, C103, H106, and M111 each contribute to the Cu cation site.

Requires Cu cation as cofactor.

It localises to the periplasm. The protein is Pseudoazurin of Methylorubrum extorquens (strain ATCC 14718 / DSM 1338 / JCM 2805 / NCIMB 9133 / AM1) (Methylobacterium extorquens).